The following is a 207-amino-acid chain: Large ribosomal subunit protein bL25 (207 aa).

Positions M1 to R20 are disordered.

This sequence belongs to the bacterial ribosomal protein bL25 family. CTC subfamily. As to quaternary structure, part of the 50S ribosomal subunit; part of the 5S rRNA/L5/L18/L25 subcomplex. Contacts the 5S rRNA. Binds to the 5S rRNA independently of L5 and L18.

Functionally, this is one of the proteins that binds to the 5S RNA in the ribosome where it forms part of the central protuberance. In Xylella fastidiosa (strain M23), this protein is Large ribosomal subunit protein bL25.